The following is a 122-amino-acid chain: Fluoride-specific ion channel FluC (122 aa).

4 helical membrane-spanning segments follow: residues 1–21, 34–54, 60–80, and 100–120; these read MIGT…SRML, FPYG…LFFS, GVHI…FTTF, and FLNI…GFLI.

Belongs to the fluoride channel Fluc/FEX (TC 1.A.43) family.

It is found in the cell inner membrane. The enzyme catalyses fluoride(in) = fluoride(out). Functionally, fluoride-specific ion channel. Important for reducing fluoride concentration in the cell, thus reducing its toxicity. In Campylobacter lari (strain RM2100 / D67 / ATCC BAA-1060), this protein is Fluoride-specific ion channel FluC.